An 83-amino-acid chain; its full sequence is Toxin Aam1 (83 aa).

The signal sequence occupies residues 1–19 (MNYLVMISLALLLMIGVES). Positions 21–82 (RDGYIVYPHN…PIYDRSYKCY (62 aa)) constitute an LCN-type CS-alpha/beta domain. Disulfide bonds link Cys31/Cys81, Cys35/Cys53, Cys39/Cys63, and Cys43/Cys65.

Belongs to the long (4 C-C) scorpion toxin superfamily. Sodium channel inhibitor family. Alpha subfamily. In terms of processing, the C-terminal basic residue is removed by a carboxypeptidase. In terms of tissue distribution, expressed by the venom gland.

The protein localises to the secreted. Alpha toxins bind voltage-independently at site-3 of sodium channels (Nav) and inhibit the inactivation of the activated channels, thereby blocking neuronal transmission. The polypeptide is Toxin Aam1 (H1) (Androctonus amoreuxi (African fattail scorpion)).